Here is a 213-residue protein sequence, read N- to C-terminus: Dephospho-CoA kinase (213 aa).

The DPCK domain maps to 3–202; the sequence is RIGLTGGIGS…QSYLALADKH (200 aa). 11–16 contributes to the ATP binding site; it reads GSGKTR.

This sequence belongs to the CoaE family.

Its subcellular location is the cytoplasm. It carries out the reaction 3'-dephospho-CoA + ATP = ADP + CoA + H(+). The protein operates within cofactor biosynthesis; coenzyme A biosynthesis; CoA from (R)-pantothenate: step 5/5. Functionally, catalyzes the phosphorylation of the 3'-hydroxyl group of dephosphocoenzyme A to form coenzyme A. The chain is Dephospho-CoA kinase from Bordetella avium (strain 197N).